Consider the following 314-residue polypeptide: Tetraacyldisaccharide 4'-kinase (314 aa).

ATP is bound at residue 61 to 68; the sequence is IVGGSGKT.

Belongs to the LpxK family.

The enzyme catalyses a lipid A disaccharide + ATP = a lipid IVA + ADP + H(+). The protein operates within glycolipid biosynthesis; lipid IV(A) biosynthesis; lipid IV(A) from (3R)-3-hydroxytetradecanoyl-[acyl-carrier-protein] and UDP-N-acetyl-alpha-D-glucosamine: step 6/6. Its function is as follows. Transfers the gamma-phosphate of ATP to the 4'-position of a tetraacyldisaccharide 1-phosphate intermediate (termed DS-1-P) to form tetraacyldisaccharide 1,4'-bis-phosphate (lipid IVA). The sequence is that of Tetraacyldisaccharide 4'-kinase from Aliarcobacter butzleri (strain RM4018) (Arcobacter butzleri).